The chain runs to 356 residues: Chaperone protein DnaJ (356 aa).

The J domain maps to 5 to 69 (DYYQILGVSK…ERRKEYDRIL (65 aa)). Residues 121 to 197 (GCEKDIEYER…CSGRGRVAMH (77 aa)) form a CR-type zinc finger. 8 residues coordinate Zn(2+): cysteine 134, cysteine 137, cysteine 151, cysteine 154, cysteine 171, cysteine 174, cysteine 185, and cysteine 188. CXXCXGXG motif repeat units lie at residues 134–141 (CPTCEGKG), 151–158 (CHACEGTG), 171–178 (CSVCKGRG), and 185–192 (CPACSGRG).

Belongs to the DnaJ family. As to quaternary structure, homodimer. Requires Zn(2+) as cofactor.

The protein localises to the cytoplasm. Its function is as follows. Participates actively in the response to hyperosmotic and heat shock by preventing the aggregation of stress-denatured proteins and by disaggregating proteins, also in an autonomous, DnaK-independent fashion. Unfolded proteins bind initially to DnaJ; upon interaction with the DnaJ-bound protein, DnaK hydrolyzes its bound ATP, resulting in the formation of a stable complex. GrpE releases ADP from DnaK; ATP binding to DnaK triggers the release of the substrate protein, thus completing the reaction cycle. Several rounds of ATP-dependent interactions between DnaJ, DnaK and GrpE are required for fully efficient folding. Also involved, together with DnaK and GrpE, in the DNA replication of plasmids through activation of initiation proteins. The protein is Chaperone protein DnaJ of Hydrogenobacter thermophilus (strain DSM 6534 / IAM 12695 / TK-6).